A 116-amino-acid chain; its full sequence is Ribonuclease P protein component (116 aa).

It belongs to the RnpA family. In terms of assembly, consists of a catalytic RNA component (M1 or rnpB) and a protein subunit.

The catalysed reaction is Endonucleolytic cleavage of RNA, removing 5'-extranucleotides from tRNA precursor.. In terms of biological role, RNaseP catalyzes the removal of the 5'-leader sequence from pre-tRNA to produce the mature 5'-terminus. It can also cleave other RNA substrates such as 4.5S RNA. The protein component plays an auxiliary but essential role in vivo by binding to the 5'-leader sequence and broadening the substrate specificity of the ribozyme. This chain is Ribonuclease P protein component, found in Geobacter sp. (strain M21).